The following is a 114-amino-acid chain: T cell receptor beta variable 4-1 (114 aa).

Residues M1–T21 form the signal peptide. The Ig-like domain occupies E22–Q114. An intrachain disulfide couples C42 to C110. N76 and N89 each carry an N-linked (GlcNAc...) asparagine glycan.

As to quaternary structure, alpha-beta TR is a heterodimer composed of an alpha and beta chain; disulfide-linked. The alpha-beta TR is associated with the transmembrane signaling CD3 coreceptor proteins to form the TR-CD3 (TcR or TCR). The assembly of alpha-beta TR heterodimers with CD3 occurs in the endoplasmic reticulum where a single alpha-beta TR heterodimer associates with one CD3D-CD3E heterodimer, one CD3G-CD3E heterodimer and one CD247 homodimer forming a stable octameric structure. CD3D-CD3E and CD3G-CD3E heterodimers preferentially associate with TR alpha and TR beta chains, respectively. The association of the CD247 homodimer is the last step of TcR assembly in the endoplasmic reticulum and is required for transport to the cell surface.

The protein resides in the cell membrane. In terms of biological role, v region of the variable domain of T cell receptor (TR) beta chain that participates in the antigen recognition. Alpha-beta T cell receptors are antigen specific receptors which are essential to the immune response and are present on the cell surface of T lymphocytes. Recognize peptide-major histocompatibility (MH) (pMH) complexes that are displayed by antigen presenting cells (APC), a prerequisite for efficient T cell adaptive immunity against pathogens. Binding of alpha-beta TR to pMH complex initiates TR-CD3 clustering on the cell surface and intracellular activation of LCK that phosphorylates the ITAM motifs of CD3G, CD3D, CD3E and CD247 enabling the recruitment of ZAP70. In turn ZAP70 phosphorylates LAT, which recruits numerous signaling molecules to form the LAT signalosome. The LAT signalosome propagates signal branching to three major signaling pathways, the calcium, the mitogen-activated protein kinase (MAPK) kinase and the nuclear factor NF-kappa-B (NF-kB) pathways, leading to the mobilization of transcription factors that are critical for gene expression and essential for T cell growth and differentiation. The T cell repertoire is generated in the thymus, by V-(D)-J rearrangement. This repertoire is then shaped by intrathymic selection events to generate a peripheral T cell pool of self-MH restricted, non-autoaggressive T cells. Post-thymic interaction of alpha-beta TR with the pMH complexes shapes TR structural and functional avidity. The protein is T cell receptor beta variable 4-1 of Homo sapiens (Human).